The chain runs to 373 residues: tRNA-specific 2-thiouridylase MnmA (373 aa).

ATP-binding positions include glycine 12–serine 19 and methionine 38. The interaction with target base in tRNA stretch occupies residues asparagine 98 to aspartate 100. The active-site Nucleophile is the cysteine 103. A disulfide bridge links cysteine 103 with cysteine 200. Glycine 127 contacts ATP. Residues lysine 150–glutamine 152 are interaction with tRNA. Cysteine 200 functions as the Cysteine persulfide intermediate in the catalytic mechanism. The interval arginine 312–tyrosine 313 is interaction with tRNA.

The protein belongs to the MnmA/TRMU family.

It is found in the cytoplasm. It catalyses the reaction S-sulfanyl-L-cysteinyl-[protein] + uridine(34) in tRNA + AH2 + ATP = 2-thiouridine(34) in tRNA + L-cysteinyl-[protein] + A + AMP + diphosphate + H(+). Functionally, catalyzes the 2-thiolation of uridine at the wobble position (U34) of tRNA, leading to the formation of s(2)U34. In Streptococcus pneumoniae (strain Hungary19A-6), this protein is tRNA-specific 2-thiouridylase MnmA.